A 359-amino-acid polypeptide reads, in one-letter code: Replication-associated protein (359 aa).

The region spanning 18-121 is the CRESS-DNA virus Rep endonuclease domain; the sequence is RHRNANTFLT…PKDKWEKGTY (104 aa). An RCR-1 motif is present at residues 25–28; it reads FLTY. A divalent metal cation contacts are provided by Glu-59, His-67, and His-69. The RCR-2 motif lies at 67-69; that stretch reads HCH. Tyr-107 serves as the catalytic For DNA cleavage activity. The RCR-3 signature appears at 107–110; sequence YILK. Asp-111 serves as a coordination point for a divalent metal cation. The interval 181–193 is oligomerization; it reads SASRLFPDIAEPY. 235-242 is a binding site for ATP; it reads GPTRTGKT. The transactivation stretch occupies residues 258–276; sequence IDWSSYDEEAQYNVVDDIP. Positions 298-309 match the Nuclear localization signal motif; it reads KYGKRRKVASKS.

This sequence belongs to the geminiviridae Rep protein family. In terms of assembly, homooligomer. Rep binds to repeated DNA motifs (iterons). Forms the O-complex, which is a Rep-DNA complex involved in the initiation of RCR. Part of the C- and V-complexes which are RepA-Rep-DNA complexes involved in the c-sense and v-sense transcription. Mg(2+) serves as cofactor. It depends on Mn(2+) as a cofactor.

It is found in the host nucleus. In terms of biological role, essential for the replication of viral ssDNA. The closed circular ssDNA genome is first converted to a superhelical dsDNA. Rep binds a specific region at the genome origin of replication. It introduces an endonucleolytic nick within the conserved sequence 5'-TAATATTAC-3' in the intergenic region of the genome present in all geminiviruses, thereby initiating the rolling circle replication (RCR). Following cleavage, binds covalently to the 5'-phosphate of DNA as a tyrosyl ester. The cleavage gives rise to a free 3'-OH that serves as a primer for the cellular DNA polymerase. The polymerase synthesizes the (+) strand DNA by rolling circle mechanism. After one round of replication, a Rep-catalyzed nucleotidyl transfer reaction releases a circular single-stranded virus genome, thereby terminating the replication. Displays origin-specific DNA cleavage, nucleotidyl transferase, ATPase and helicase activities. Acts as an inhibitor of C-sense gene transcription. This chain is Replication-associated protein, found in Megathyrsus maximus (PanSV).